We begin with the raw amino-acid sequence, 85 residues long: Toxin BmKa1 (85 aa).

Positions 1 to 19 (MNYLVFFSLALLLMTGVGS) are cleaved as a signal peptide. Residues 21 to 83 (RDGYIADDKN…VPIRVPGKCN (63 aa)) form the LCN-type CS-alpha/beta domain. 4 disulfides stabilise this stretch: cysteine 31/cysteine 82, cysteine 35/cysteine 55, cysteine 41/cysteine 65, and cysteine 45/cysteine 67.

It belongs to the long (4 C-C) scorpion toxin superfamily. Sodium channel inhibitor family. Alpha subfamily. As to expression, expressed by the venom gland.

The protein resides in the secreted. In terms of biological role, alpha toxins bind voltage-independently at site-3 of sodium channels (Nav) and inhibit the inactivation of the activated channels, thereby blocking neuronal transmission. In Olivierus martensii (Manchurian scorpion), this protein is Toxin BmKa1.